A 277-amino-acid polypeptide reads, in one-letter code: S-formylglutathione hydrolase FrmB (277 aa).

Residues Ser145, Asp221, and His254 each act as charge relay system in the active site.

It belongs to the esterase D family.

It carries out the reaction S-formylglutathione + H2O = formate + glutathione + H(+). In terms of biological role, serine hydrolase involved in the detoxification of formaldehyde. Hydrolyzes S-formylglutathione to glutathione and formate. The polypeptide is S-formylglutathione hydrolase FrmB (frmB) (Escherichia coli O157:H7).